The chain runs to 960 residues: Leucine--tRNA ligase (960 aa).

Positions 71–82 match the 'HIGH' region motif; the sequence is PYPSGAGLHVGH. The short motif at 729 to 733 is the 'KMSKS' region element; it reads KMGKS. ATP is bound at residue Lys732.

Belongs to the class-I aminoacyl-tRNA synthetase family.

It localises to the cytoplasm. It carries out the reaction tRNA(Leu) + L-leucine + ATP = L-leucyl-tRNA(Leu) + AMP + diphosphate. This is Leucine--tRNA ligase from Corynebacterium diphtheriae (strain ATCC 700971 / NCTC 13129 / Biotype gravis).